The chain runs to 252 residues: Geranylgeranylglyceryl phosphate synthase (252 aa).

Mg(2+)-binding residues include aspartate 26 and serine 55. Sn-glycerol 1-phosphate-binding positions include 174–180 (YLEAGSG), 205–206 (GG), and 227–228 (GT).

The protein belongs to the GGGP/HepGP synthase family. Group II subfamily. Mg(2+) serves as cofactor.

The protein localises to the cytoplasm. The enzyme catalyses sn-glycerol 1-phosphate + (2E,6E,10E)-geranylgeranyl diphosphate = sn-3-O-(geranylgeranyl)glycerol 1-phosphate + diphosphate. The protein operates within membrane lipid metabolism; glycerophospholipid metabolism. Its function is as follows. Prenyltransferase that catalyzes the transfer of the geranylgeranyl moiety of geranylgeranyl diphosphate (GGPP) to the C3 hydroxyl of sn-glycerol-1-phosphate (G1P). This reaction is the first ether-bond-formation step in the biosynthesis of archaeal membrane lipids. The chain is Geranylgeranylglyceryl phosphate synthase from Thermococcus gammatolerans (strain DSM 15229 / JCM 11827 / EJ3).